The following is a 409-amino-acid chain: Z-DNA-binding protein 1 (409 aa).

2 Z-binding domains span residues 8 to 70 (LGTG…SLGG) and 85 to 147 (SAAQ…TIYR). Residues Lys17 and Lys43 each participate in a glycyl lysine isopeptide (Lys-Gly) (interchain with G-Cter in ubiquitin) cross-link. The disordered stretch occupies residues 59–87 (SSPAPATWSLGGDGASGDGAPEIPEDSAA). 2 short sequence motifs (RIP homotypic interaction motif (RHIM)) span residues 183 to 207 (NSLISISNSKAIQIGHGNVMSRQTI) and 241 to 265 (LIHLNKSMLRRVQLGHGNEMNLERD). Disordered stretches follow at residues 269–307 (HPIFSFSSSPPESTTTADPETAFNMQTPEPGPHPEGGTT) and 323–369 (GNNN…TPSD). Residues 270-290 (PIFSFSSSPPESTTTADPETA) show a composition bias toward low complexity. The segment covering 337–351 (GTKESADSQELKEDT) has biased composition (basic and acidic residues).

In terms of assembly, homodimer. Interacts (via RIP homotypic interaction motif) with RIPK3; leading to RIPK3 activation and necroptosis; interaction is enhanced by CASP6. Interacts (via RIP homotypic interaction motif) with RIPK1. Component of the AIM2 PANoptosome complex, a multiprotein complex that drives inflammatory cell death (PANoptosis). Post-translationally, ubiquitinated; polyubiquitinated following influenza A virus (IAV) infection. Phosphorylated.

The protein localises to the cytoplasm. Its subcellular location is the nucleus. Its activity is regulated as follows. ZBP1-dependent necroptosis is normally inhibited by RIPK1: RIPK1 inhibits the ZBP1-induced activation of RIPK3 via FADD-mediated recruitment of CASP8, which cleaves RIPK1 and limits TNF-induced necroptosis. Key innate sensor that recognizes and binds Z-RNA structures, which are produced by a number of viruses, such as herpesvirus, orthomyxovirus or flavivirus, and triggers different forms of cell death. ZBP1 acts as an essential mediator of pyroptosis, necroptosis and apoptosis (PANoptosis), an integral part of host defense against pathogens, by activating RIPK3, caspase-8 (CASP8), and the NLRP3 inflammasome. Key activator of necroptosis, a programmed cell death process in response to death-inducing TNF-alpha family members, via its ability to bind Z-RNA: once activated upon Z-RNA-binding, ZBP1 interacts and stimulates RIPK3 kinase, which phosphorylates and activates MLKL, triggering execution of programmed necrosis. In addition to TNF-induced necroptosis, necroptosis can also take place in the nucleus in response to orthomyxoviruses infection: ZBP1 recognizes and binds Z-RNA structures that are produced in infected nuclei by orthomyxoviruses, such as the influenza A virus (IAV), leading to ZBP1 activation, RIPK3 stimulation and subsequent MLKL phosphorylation, triggering disruption of the nuclear envelope and leakage of cellular DNA into the cytosol. ZBP1-dependent cell death in response to IAV infection promotes interleukin-1 alpha (IL1A) induction in an NLRP3-inflammasome-independent manner: IL1A expression is required for the optimal interleukin-1 beta (IL1B) production, and together, these cytokines promote infiltration of inflammatory neutrophils to the lung, leading to the formation of neutrophil extracellular traps. In addition to its direct role in driving necroptosis via its ability to sense Z-RNAs, also involved in PANoptosis triggered in response to bacterial infection: component of the AIM2 PANoptosome complex, a multiprotein complex that triggers PANoptosis. Also acts as the apical sensor of fungal infection responsible for activating PANoptosis. Involved in CASP8-mediated cell death via its interaction with RIPK1 but independently of its ability to sense Z-RNAs. In some cell types, also able to restrict viral replication by promoting cell death-independent responses. In response to flavivirus infection in neurons, promotes a cell death-independent pathway that restricts viral replication: together with RIPK3, promotes a death-independent transcriptional program that modifies the cellular metabolism via up-regulation expression of the enzyme ACOD1/IRG1 and production of the metabolite itaconate. Itaconate inhibits the activity of succinate dehydrogenase, generating a metabolic state in neurons that suppresses replication of viral genomes. The sequence is that of Z-DNA-binding protein 1 from Rattus norvegicus (Rat).